A 293-amino-acid chain; its full sequence is Cytosolic Fe-S cluster assembly factor CFD1 (293 aa).

25 to 32 lines the ATP pocket; that stretch reads GKGGVGKS. [4Fe-4S] cluster is bound by residues Cys201 and Cys204. Ser291 is modified (phosphoserine).

The protein belongs to the Mrp/NBP35 ATP-binding proteins family. NUBP2/CFD1 subfamily. In terms of assembly, heterotetramer of 2 NBP35 and 2 CFD1 chains. Requires [4Fe-4S] cluster as cofactor.

The protein resides in the cytoplasm. Functionally, component of the cytosolic iron-sulfur (Fe/S) protein assembly (CIA) machinery. Required for maturation of extramitochondrial Fe-S proteins. The NBP35-CFD1 heterotetramer forms a Fe-S scaffold complex, mediating the de novo assembly of an Fe-S cluster and its transfer to target apoproteins. Nucleotide binding/hydrolysis seems to be critcal for loading of Fe-S clusters onto CFD1 and NBP35. Required for biogenesis and export of both ribosomal subunits, which may reflect a role in assembly of the Fe/S clusters in RLI1, a protein which performs rRNA processing and ribosome export. The polypeptide is Cytosolic Fe-S cluster assembly factor CFD1 (Saccharomyces cerevisiae (strain ATCC 204508 / S288c) (Baker's yeast)).